A 259-amino-acid chain; its full sequence is HTH-type transcriptional regulator Rv1719 (259 aa).

An HTH iclR-type domain is found at 13-75; the sequence is IQVIARAAEL…GARGPYRLGP (63 aa). The H-T-H motif DNA-binding region spans 35-54; that stretch reads QAEIGERVGMARSTVSRILN. Residues 88–259 form the IclR-ED domain; the sequence is VVTEMHPFLT…AWFNGTEDRK (172 aa).

Homodimer.

Functionally, binds to the upstream region of Rv1714 and probably modulates the expression of the downstream gene(s). This is HTH-type transcriptional regulator Rv1719 from Mycobacterium tuberculosis (strain ATCC 25618 / H37Rv).